The chain runs to 501 residues: Calcium-dependent protein kinase 4 (501 aa).

One can recognise a Protein kinase domain in the interval 25 to 283 (YLLGKKLGQG…AHEALCHPWI (259 aa)). ATP-binding positions include 31 to 39 (LGQGQFGTT) and Lys-54. Asp-149 (proton acceptor) is an active-site residue. A Phosphoserine modification is found at Ser-189. Residues 289–319 (APDKPLDPAVLSRLKQFSQMNKIKKMALRVI) form an autoinhibitory domain region. EF-hand domains lie at 326–361 (EEIG…VGSE), 362–397 (LMES…INKM), 398–433 (EREE…FGLC), and 437–467 (LDDM…GDGV). The Ca(2+) site is built by Asp-339, Asp-341, Ser-343, Thr-345, Glu-350, Asp-375, Asp-377, Ser-379, Thr-381, Glu-386, Asp-411, Asp-413, Ser-415, Tyr-417, Glu-422, Asp-445, Asp-447, Asp-449, Lys-451, and Glu-456.

This sequence belongs to the protein kinase superfamily. Ser/Thr protein kinase family. CDPK subfamily. Interacts with Di19.

Its subcellular location is the cytoplasm. The protein localises to the nucleus. It carries out the reaction L-seryl-[protein] + ATP = O-phospho-L-seryl-[protein] + ADP + H(+). The enzyme catalyses L-threonyl-[protein] + ATP = O-phospho-L-threonyl-[protein] + ADP + H(+). With respect to regulation, activated by calcium. Autophosphorylation may play an important role in the regulation of the kinase activity. May play a role in signal transduction pathways that involve calcium as a second messenger. Functions as a regulator of the calcium-mediated abscisic acid (ABA) signaling pathway. Phosphorylates ABA-responsive transcription factors ABF1 and ABF4 in vitro. Phosphorylates the nuclear zinc finger Di19 in vitro. This is Calcium-dependent protein kinase 4 (CPK4) from Arabidopsis thaliana (Mouse-ear cress).